The following is a 209-amino-acid chain: FMN-dependent NADH:quinone oxidoreductase (209 aa).

FMN contacts are provided by residues Ser-10, 16–18, and 98–101; these read SHS and MWNF.

Belongs to the azoreductase type 1 family. In terms of assembly, homodimer. FMN serves as cofactor.

The catalysed reaction is 2 a quinone + NADH + H(+) = 2 a 1,4-benzosemiquinone + NAD(+). It carries out the reaction N,N-dimethyl-1,4-phenylenediamine + anthranilate + 2 NAD(+) = 2-(4-dimethylaminophenyl)diazenylbenzoate + 2 NADH + 2 H(+). Quinone reductase that provides resistance to thiol-specific stress caused by electrophilic quinones. Its function is as follows. Also exhibits azoreductase activity. Catalyzes the reductive cleavage of the azo bond in aromatic azo compounds to the corresponding amines. The polypeptide is FMN-dependent NADH:quinone oxidoreductase (Nitratidesulfovibrio vulgaris (strain ATCC 29579 / DSM 644 / CCUG 34227 / NCIMB 8303 / VKM B-1760 / Hildenborough) (Desulfovibrio vulgaris)).